Reading from the N-terminus, the 193-residue chain is Peptidyl-tRNA hydrolase 1 (193 aa).

Tyr-27 provides a ligand contact to tRNA. The active-site Proton acceptor is the His-32. Residues Phe-80, Asn-82, and Asn-128 each contribute to the tRNA site.

It belongs to the PTH family. In terms of assembly, monomer.

The protein localises to the cytoplasm. The catalysed reaction is an N-acyl-L-alpha-aminoacyl-tRNA + H2O = an N-acyl-L-amino acid + a tRNA + H(+). Its function is as follows. Hydrolyzes ribosome-free peptidyl-tRNAs (with 1 or more amino acids incorporated), which drop off the ribosome during protein synthesis, or as a result of ribosome stalling. Catalyzes the release of premature peptidyl moieties from peptidyl-tRNA molecules trapped in stalled 50S ribosomal subunits, and thus maintains levels of free tRNAs and 50S ribosomes. The polypeptide is Peptidyl-tRNA hydrolase 1 (Corynebacterium jeikeium (strain K411)).